Here is a 338-residue protein sequence, read N- to C-terminus: Serpentine receptor class alpha-31 (338 aa).

The next 7 membrane-spanning stretches (helical) occupy residues 23–43 (GNHC…VFAI), 59–79 (LLFS…GIRI), 108–125 (LYYY…SLFF), 142–162 (FSKI…YWIF), 188–208 (VNEF…VIFF), 240–260 (VCII…TTEI), and 276–296 (SIAF…IIIY).

Belongs to the nematode receptor-like protein sra family.

The protein localises to the membrane. This chain is Serpentine receptor class alpha-31 (sra-31), found in Caenorhabditis elegans.